We begin with the raw amino-acid sequence, 41 residues long: Ornatin-A3 (41 aa).

A Cell attachment site motif is present at residues 33–35; the sequence is RGD.

The protein belongs to the ornatin family.

It is found in the secreted. Functionally, potent inhibitor of fibrinogen interaction with platelet receptors expressed on glycoprotein IIb-IIIa complex. May prevent blood from clotting during either feeding and/or storage of ingested blood. This is Ornatin-A3 from Placobdella ornata (Turtle leech).